Consider the following 213-residue polypeptide: N-(5'-phosphoribosyl)anthranilate isomerase (213 aa).

It belongs to the TrpF family.

It catalyses the reaction N-(5-phospho-beta-D-ribosyl)anthranilate = 1-(2-carboxyphenylamino)-1-deoxy-D-ribulose 5-phosphate. Its pathway is amino-acid biosynthesis; L-tryptophan biosynthesis; L-tryptophan from chorismate: step 3/5. The polypeptide is N-(5'-phosphoribosyl)anthranilate isomerase (Caulobacter sp. (strain K31)).